The chain runs to 161 residues: Phage-like element PBSX protein XkdI (161 aa).

The protein to B.subtilis YqbI.

The chain is Phage-like element PBSX protein XkdI (xkdI) from Bacillus subtilis (strain 168).